A 145-amino-acid polypeptide reads, in one-letter code: Large ribosomal subunit protein uL16 (145 aa).

Belongs to the universal ribosomal protein uL16 family. In terms of assembly, part of the 50S ribosomal subunit.

Binds 23S rRNA and is also seen to make contacts with the A and possibly P site tRNAs. The protein is Large ribosomal subunit protein uL16 of Exiguobacterium sibiricum (strain DSM 17290 / CCUG 55495 / CIP 109462 / JCM 13490 / 255-15).